We begin with the raw amino-acid sequence, 80 residues long: MTLVMGSCCGRFCDAKNKNKKEDVEEGREGCYNYKNLNDLDESEARVEFGPLYMINEEKSDINTLDIKRRYRHTIESVYF.

It belongs to the orthopoxvirus OPG051 family.

This chain is Protein OPG051 (OPG051), found in Vaccinia virus (strain Western Reserve) (VACV).